The following is a 1201-amino-acid chain: ATP-dependent helicase/deoxyribonuclease subunit B (1201 aa).

Belongs to the helicase family. AddB/RexB type 2 subfamily. As to quaternary structure, heterodimer of AddA and RexB. Requires Mg(2+) as cofactor.

In terms of biological role, the heterodimer acts as both an ATP-dependent DNA helicase and an ATP-dependent, dual-direction single-stranded exonuclease. Recognizes the chi site generating a DNA molecule suitable for the initiation of homologous recombination. This subunit has 5' -&gt; 3' nuclease activity but not helicase activity. The sequence is that of ATP-dependent helicase/deoxyribonuclease subunit B from Levilactobacillus brevis (strain ATCC 367 / BCRC 12310 / CIP 105137 / JCM 1170 / LMG 11437 / NCIMB 947 / NCTC 947) (Lactobacillus brevis).